A 237-amino-acid polypeptide reads, in one-letter code: Ribosomal RNA small subunit methyltransferase G (237 aa).

S-adenosyl-L-methionine is bound by residues Gly-78, Phe-83, 129-130 (AE), and Arg-148. The disordered stretch occupies residues 218 to 237 (KKETPRKYPRKAGTPNKKPL).

It belongs to the methyltransferase superfamily. RNA methyltransferase RsmG family.

It is found in the cytoplasm. Specifically methylates the N7 position of a guanine in 16S rRNA. The sequence is that of Ribosomal RNA small subunit methyltransferase G from Streptococcus uberis (strain ATCC BAA-854 / 0140J).